The following is a 275-amino-acid chain: Large ribosomal subunit protein uL2 (275 aa).

Positions 223 to 275 (VAMNPVDHPHGGGEGRTGEAREPVSPWGTPSKGFKTRRNKRTNNMIVQRRKRK) are disordered. Positions 229–244 (DHPHGGGEGRTGEARE) are enriched in basic and acidic residues.

Belongs to the universal ribosomal protein uL2 family. Part of the 50S ribosomal subunit. Forms a bridge to the 30S subunit in the 70S ribosome.

Its function is as follows. One of the primary rRNA binding proteins. Required for association of the 30S and 50S subunits to form the 70S ribosome, for tRNA binding and peptide bond formation. It has been suggested to have peptidyltransferase activity; this is somewhat controversial. Makes several contacts with the 16S rRNA in the 70S ribosome. The chain is Large ribosomal subunit protein uL2 from Bordetella petrii (strain ATCC BAA-461 / DSM 12804 / CCUG 43448).